Reading from the N-terminus, the 437-residue chain is Enolase 2 (437 aa).

K60 is covalently cross-linked (Glycyl lysine isopeptide (Lys-Gly) (interchain with G-Cter in ubiquitin)). S138 carries the post-translational modification Phosphoserine. The active site involves H160. Residue S188 is modified to Phosphoserine. A Glycyl lysine isopeptide (Lys-Gly) (interchain with G-Cter in ubiquitin) cross-link involves residue K243. 2 residues coordinate Mg(2+): D247 and E296. A Phosphothreonine modification is found at T313. Position 321 (D321) interacts with Mg(2+). Residue T324 is modified to Phosphothreonine. Residue K358 forms a Glycyl lysine isopeptide (Lys-Gly) (interchain with G-Cter in ubiquitin) linkage.

Belongs to the enolase family. Homodimer. Requires Mg(2+) as cofactor.

It is found in the cytoplasm. It carries out the reaction (2R)-2-phosphoglycerate = phosphoenolpyruvate + H2O. It participates in carbohydrate degradation; glycolysis; pyruvate from D-glyceraldehyde 3-phosphate: step 4/5. The polypeptide is Enolase 2 (ENO2) (Saccharomyces cerevisiae (strain ATCC 204508 / S288c) (Baker's yeast)).